Here is a 377-residue protein sequence, read N- to C-terminus: NADP-dependent oxidoreductase lnbE (377 aa).

Residues 170-173, 257-263, and 293-295 contribute to the NADP(+) site; these read GGNG, LTNPRVS, and SPV.

The protein belongs to the NADP-dependent oxidoreductase L4BD family.

It functions in the pathway secondary metabolite biosynthesis. NADP-dependent oxidoreductase; part of the lnb gene cluster that mediates the biosynthesis of diastereomeric piperazines. Lna and lnb clusters encode sets of enzymes that produce overlapping sets of previously undescribed metabolites such as piperazinomycin-like metabolites or morpholine. The lna and lnb biosynthetic pathways appear to be part of a signaling network that controls the formation of sclerotia, a resilient overwintering structure. One primary function of the non-canonical nonribosomal peptide synthetases lnaA and lnbA consists in the reduction of L-tyrosine. The presence in the clusters of tailoring enzymes such as the oxidoreductases lnaB, lnbB, lnaE or lnbE, as well as of the cytochrome P450 monooxygenases lnaC, lnaD, or lnbC, might explain formation of various diastereomeric piperazines. The chain is NADP-dependent oxidoreductase lnbE from Aspergillus flavus (strain ATCC 200026 / FGSC A1120 / IAM 13836 / NRRL 3357 / JCM 12722 / SRRC 167).